Consider the following 372-residue polypeptide: tRNA pseudouridine synthase D (372 aa).

Residue Asp-85 is the Nucleophile of the active site. Positions 160 to 330 constitute a TRUD domain; the sequence is GFTNYFGYQR…MQGSRRFMWG (171 aa).

This sequence belongs to the pseudouridine synthase TruD family.

The catalysed reaction is uridine(13) in tRNA = pseudouridine(13) in tRNA. In terms of biological role, responsible for synthesis of pseudouridine from uracil-13 in transfer RNAs. The polypeptide is tRNA pseudouridine synthase D (Campylobacter jejuni subsp. jejuni serotype O:23/36 (strain 81-176)).